Consider the following 576-residue polypeptide: Probable DNA ligase (576 aa).

Glu235 provides a ligand contact to ATP. Catalysis depends on Lys237, which acts as the N6-AMP-lysine intermediate. Positions 242, 257, 285, 324, 422, and 428 each coordinate ATP.

The protein belongs to the ATP-dependent DNA ligase family. Mg(2+) is required as a cofactor.

The enzyme catalyses ATP + (deoxyribonucleotide)n-3'-hydroxyl + 5'-phospho-(deoxyribonucleotide)m = (deoxyribonucleotide)n+m + AMP + diphosphate.. Functionally, DNA ligase that seals nicks in double-stranded DNA during DNA replication, DNA recombination and DNA repair. The sequence is that of Probable DNA ligase from Koribacter versatilis (strain Ellin345).